Consider the following 637-residue polypeptide: 3D-(3,5/4)-trihydroxycyclohexane-1,2-dione hydrolase (637 aa).

Glu-65 contacts thiamine diphosphate. The tract at residues Ser-441–Gly-521 is thiamine pyrophosphate binding. 2 residues coordinate Mg(2+): Asp-492 and Asn-519.

The protein belongs to the TPP enzyme family. The cofactor is Mg(2+). Thiamine diphosphate is required as a cofactor.

The catalysed reaction is 3D-3,5/4-trihydroxycyclohexane-1,2-dione + H2O = 5-deoxy-D-glucuronate + H(+). It functions in the pathway polyol metabolism; myo-inositol degradation into acetyl-CoA; acetyl-CoA from myo-inositol: step 3/7. Its function is as follows. Involved in the cleavage of the C1-C2 bond of 3D-(3,5/4)-trihydroxycyclohexane-1,2-dione (THcHDO) to yield 5-deoxy-glucuronate (5DG). The protein is 3D-(3,5/4)-trihydroxycyclohexane-1,2-dione hydrolase of Halalkalibacterium halodurans (strain ATCC BAA-125 / DSM 18197 / FERM 7344 / JCM 9153 / C-125) (Bacillus halodurans).